Reading from the N-terminus, the 23-residue chain is Keratin (23 aa).

In terms of domain architecture, IF rod spans 1-23 (YSSQLAQVQGLIGNVESQLAEIR). A coil 2 region spans residues 1–23 (YSSQLAQVQGLIGNVESQLAEIR).

The protein belongs to the intermediate filament family.

In Cervus elaphus (Red deer), this protein is Keratin.